A 449-amino-acid polypeptide reads, in one-letter code: Exodeoxyribonuclease 7 large subunit (449 aa).

This sequence belongs to the XseA family. In terms of assembly, heterooligomer composed of large and small subunits.

The protein localises to the cytoplasm. The enzyme catalyses Exonucleolytic cleavage in either 5'- to 3'- or 3'- to 5'-direction to yield nucleoside 5'-phosphates.. Functionally, bidirectionally degrades single-stranded DNA into large acid-insoluble oligonucleotides, which are then degraded further into small acid-soluble oligonucleotides. This chain is Exodeoxyribonuclease 7 large subunit, found in Salmonella typhimurium (strain LT2 / SGSC1412 / ATCC 700720).